The primary structure comprises 560 residues: Vanillyl-alcohol oxidase (560 aa).

The FAD-binding PCMH-type domain occupies 67–272 (DYFLASAIVA…TKIGIWLMPN (206 aa)). The active site involves Tyr108. The residue at position 422 (His422) is a Tele-8alpha-FAD histidine. Catalysis depends on residues Tyr503 and Arg504.

To bacterial flavocytochrome p-cresol methyl hydroxylase. As to quaternary structure, homooctamer (tetramer of tightly interacting dimers). It depends on FAD as a cofactor.

It localises to the peroxisome. Its subcellular location is the cytoplasm. It carries out the reaction 4-hydroxy-3-methoxy-benzenemethanol + O2 = vanillin + H2O2. Competitively inhibited by cinnamyl and coniferyl alcohols and by isoeugenol. Catalyzes the conversion of vanillin alcohol to vanillin, and also the conversion of a wide range of phenolic compounds bearing side chains of variable size at the para position of the aromatic ring. Crucial for the degradation of the secondary metabolites derived from the degradation of the lignin. Catalyzes besides the oxidation of 4-hydroxybenzyl alcohols, the oxidative deamination of 4-hydroxybenzylamines, the oxidative demethylation of 4-(methoxy-methyl)phenols and the oxidative hydration of 4-allylphenols. Most active with 4-allylphenols. This chain is Vanillyl-alcohol oxidase (VAOA), found in Penicillium simplicissimum.